Consider the following 389-residue polypeptide: Carbamoyl phosphate synthase small chain (389 aa).

A CPSase region spans residues 1 to 199 (MFNPAILVLA…AGKPFNLQTT (199 aa)). Residues Ser-50, Gly-251, and Gly-253 each contribute to the L-glutamine site. The Glutamine amidotransferase type-1 domain maps to 203 to 389 (HVVAYDFGIK…FINAVQATKA (187 aa)). Cys-279 functions as the Nucleophile in the catalytic mechanism. L-glutamine-binding residues include Leu-280, Gln-283, Asn-321, Gly-323, and Phe-324. Catalysis depends on residues His-363 and Glu-365.

This sequence belongs to the CarA family. In terms of assembly, composed of two chains; the small (or glutamine) chain promotes the hydrolysis of glutamine to ammonia, which is used by the large (or ammonia) chain to synthesize carbamoyl phosphate. Tetramer of heterodimers (alpha,beta)4.

It catalyses the reaction hydrogencarbonate + L-glutamine + 2 ATP + H2O = carbamoyl phosphate + L-glutamate + 2 ADP + phosphate + 2 H(+). The catalysed reaction is L-glutamine + H2O = L-glutamate + NH4(+). The protein operates within amino-acid biosynthesis; L-arginine biosynthesis; carbamoyl phosphate from bicarbonate: step 1/1. It functions in the pathway pyrimidine metabolism; UMP biosynthesis via de novo pathway; (S)-dihydroorotate from bicarbonate: step 1/3. Functionally, small subunit of the glutamine-dependent carbamoyl phosphate synthetase (CPSase). CPSase catalyzes the formation of carbamoyl phosphate from the ammonia moiety of glutamine, carbonate, and phosphate donated by ATP, constituting the first step of 2 biosynthetic pathways, one leading to arginine and/or urea and the other to pyrimidine nucleotides. The small subunit (glutamine amidotransferase) binds and cleaves glutamine to supply the large subunit with the substrate ammonia. The sequence is that of Carbamoyl phosphate synthase small chain from Haemophilus ducreyi (strain 35000HP / ATCC 700724).